Consider the following 205-residue polypeptide: Holliday junction branch migration complex subunit RuvA (205 aa).

The segment at 1–64 (MIGKLKGLID…EDQIKLFGFR (64 aa)) is domain I. The tract at residues 65–143 (SDLEREWFRL…GFASVDPAVA (79 aa)) is domain II. Residues 144–153 (HLSGAIEERS) are flexible linker. The segment at 153 to 205 (SAPRPVADAISALVNLGYGQPQAAAAIAAAARSAGDAAQTAQLIKLGLKELSK) is domain III.

The protein belongs to the RuvA family. As to quaternary structure, homotetramer. Forms an RuvA(8)-RuvB(12)-Holliday junction (HJ) complex. HJ DNA is sandwiched between 2 RuvA tetramers; dsDNA enters through RuvA and exits via RuvB. An RuvB hexamer assembles on each DNA strand where it exits the tetramer. Each RuvB hexamer is contacted by two RuvA subunits (via domain III) on 2 adjacent RuvB subunits; this complex drives branch migration. In the full resolvosome a probable DNA-RuvA(4)-RuvB(12)-RuvC(2) complex forms which resolves the HJ.

It is found in the cytoplasm. In terms of biological role, the RuvA-RuvB-RuvC complex processes Holliday junction (HJ) DNA during genetic recombination and DNA repair, while the RuvA-RuvB complex plays an important role in the rescue of blocked DNA replication forks via replication fork reversal (RFR). RuvA specifically binds to HJ cruciform DNA, conferring on it an open structure. The RuvB hexamer acts as an ATP-dependent pump, pulling dsDNA into and through the RuvAB complex. HJ branch migration allows RuvC to scan DNA until it finds its consensus sequence, where it cleaves and resolves the cruciform DNA. The polypeptide is Holliday junction branch migration complex subunit RuvA (Rhodopseudomonas palustris (strain BisA53)).